The chain runs to 297 residues: Endonuclease G, mitochondrial (297 aa).

The transit peptide at 1–48 directs the protein to the mitochondrion; sequence MRALRAGLTLASGAGLGAVVEGWRRRREDARAAPGLLGRLPVLPVAAA. Residue T128 is modified to Phosphothreonine; by GSK3-beta. H141 functions as the Proton acceptor in the catalytic mechanism. Residue N172 coordinates Mg(2+). The essential for deoxyribonuclease activity stretch occupies residues 286-296; sequence AGSLKAITAGS. S288 carries the phosphoserine; by GSK3-beta modification.

This sequence belongs to the DNA/RNA non-specific endonuclease family. In terms of assembly, homodimer; disulfide-linked. Homodimerization is essential for enzyme activity. Interacts with YWHAG. Mg(2+) is required as a cofactor. Post-translationally, GSK3-beta-mediated dual phosphorylations at Thr-128 and Ser-288 is necessary for its interaction with YWHAG and the induction of autophagy.

Its subcellular location is the mitochondrion. Functionally, endonuclease that preferentially catalyzes the cleavage of double-stranded 5-hydroxymethylcytosine (5hmC)-modified DNA. The 5hmC-modified nucleotide does not increase the binding affinity, but instead increases the efficiency of cutting and specifies the site of cleavage for the modified DNAs. Shows significantly higher affinity for four-stranded Holliday junction over duplex and single-stranded DNAs. Promotes conservative recombination when the DNA is 5hmC-modified. Promotes autophagy through the suppression of mTOR by its phosphorylation-mediated interaction with YWHAG and its endonuclease activity-mediated DNA damage response. GSK3-beta mediated phosphorylation of ENDOG enhances its interaction with YWHAG, leading to the release of TSC2 and PIK3C3 from YWHAG resulting in mTOR pathway suppression and autophagy initiation. Promotes cleavage of mtDNA in response to oxidative and nitrosative stress, in turn inducing compensatory mtDNA replication. In Homo sapiens (Human), this protein is Endonuclease G, mitochondrial (ENDOG).